We begin with the raw amino-acid sequence, 297 residues long: MDQAAVCLTICRINQLLSPSLLLKWWKADPSMSLTSPVLQTVTRDQIKAAALKNEIEQFYPKLPRVLAAYREQGINTIPISSKQYPFWLKSIYDPPAVLFAKGDMTLLSKGRKIGIVGTRNPTAYGKQVVNHLTKEICRKGWVIVSGLASGIDGMSHAASIKAKGRTIGVIAGGFQHIYPRENLQLADHMAKHHILLSEHPPETKPQKWHFPMRNRIISGLSEGVIVVQGKEKSGSLITAYQALEQGREVFAVPGSLFDPYAGGPIKLIQQGAKAIWSAEDIFEELPERNVQYTEPF.

This sequence belongs to the DprA/Smf family. In terms of assembly, interacts with RecA. Interacts with ComFA and ComFC.

The protein localises to the cytoplasm. Functionally, protein that helps load RecA onto ssDNA during transformation. Binds cooperatively to circular ssDNA, is able to bridge different segments of DNA. Favors the loading of RecA onto SsbA- or SsbB-coated ssDNA and formation of RecA-DNA filaments. RecA-ATP cannot catalyze homologous DNA strand exchange; SsbA and DprA activate strand exchange by RecA-ATP. The sequence is that of DNA processing protein DprA from Bacillus subtilis (strain 168).